Consider the following 250-residue polypeptide: ATP synthase subunit a (250 aa).

6 helical membrane-spanning segments follow: residues 26-46 (FTNA…FLYF), 84-104 (FFPL…LGMF), 114-134 (IIVT…YGFY), 143-163 (VFVP…IEII), 193-213 (FVAS…LPLI), and 216-236 (VALT…FAVL).

This sequence belongs to the ATPase A chain family. F-type ATPases have 2 components, CF(1) - the catalytic core - and CF(0) - the membrane proton channel. CF(1) has five subunits: alpha(3), beta(3), gamma(1), delta(1), epsilon(1). CF(0) has three main subunits: a(1), b(2) and c(9-12). The alpha and beta chains form an alternating ring which encloses part of the gamma chain. CF(1) is attached to CF(0) by a central stalk formed by the gamma and epsilon chains, while a peripheral stalk is formed by the delta and b chains.

It localises to the cell inner membrane. Key component of the proton channel; it plays a direct role in the translocation of protons across the membrane. The sequence is that of ATP synthase subunit a from Rhizobium etli (strain ATCC 51251 / DSM 11541 / JCM 21823 / NBRC 15573 / CFN 42).